The sequence spans 147 residues: Hemoglobin subunit gamma (147 aa).

The 145-residue stretch at H3–H147 folds into the Globin domain. H64 and H93 together coordinate heme b.

Belongs to the globin family. In terms of assembly, heterotetramer of two alpha chains and two gamma chains in fetal hemoglobin (Hb F). In terms of tissue distribution, red blood cells.

In terms of biological role, gamma chains make up the fetal hemoglobin F, in combination with alpha chains. The polypeptide is Hemoglobin subunit gamma (HBG) (Elephas maximus (Indian elephant)).